Consider the following 319-residue polypeptide: tRNA-cytidine(32) 2-sulfurtransferase (319 aa).

A PP-loop motif motif is present at residues 43–48 (SGGKDS). The [4Fe-4S] cluster site is built by cysteine 118, cysteine 121, and cysteine 209.

The protein belongs to the TtcA family. In terms of assembly, homodimer. Mg(2+) is required as a cofactor. [4Fe-4S] cluster serves as cofactor.

Its subcellular location is the cytoplasm. It carries out the reaction cytidine(32) in tRNA + S-sulfanyl-L-cysteinyl-[cysteine desulfurase] + AH2 + ATP = 2-thiocytidine(32) in tRNA + L-cysteinyl-[cysteine desulfurase] + A + AMP + diphosphate + H(+). The protein operates within tRNA modification. Its function is as follows. Catalyzes the ATP-dependent 2-thiolation of cytidine in position 32 of tRNA, to form 2-thiocytidine (s(2)C32). The sulfur atoms are provided by the cysteine/cysteine desulfurase (IscS) system. This chain is tRNA-cytidine(32) 2-sulfurtransferase, found in Neisseria meningitidis serogroup C / serotype 2a (strain ATCC 700532 / DSM 15464 / FAM18).